We begin with the raw amino-acid sequence, 359 residues long: Uroporphyrinogen decarboxylase (359 aa).

Coproporphyrinogen III contacts are provided by arginine 28, alanine 30, arginine 32, aspartate 79, tyrosine 157, serine 212, and histidine 335.

The protein belongs to the uroporphyrinogen decarboxylase family. As to quaternary structure, monomer.

The protein localises to the nucleus. It is found in the cytoplasm. The catalysed reaction is uroporphyrinogen III + 4 H(+) = coproporphyrinogen III + 4 CO2. It carries out the reaction uroporphyrinogen I + 4 H(+) = coproporphyrinogen I + 4 CO2. The protein operates within porphyrin-containing compound metabolism; protoporphyrin-IX biosynthesis; coproporphyrinogen-III from 5-aminolevulinate: step 4/4. Catalyzes the sequential decarboxylation of four acetate groups of uroporphyrinogen-III (octacarboxyporphyrin) to yield coproporphyrinogen-III (tetracarboxyporphyrin) with the formation of intermediate hepta-, hexa- and penta-carboxylate porphyrinogens in the heme biosynthesis pathway. Acts on a number of porphyrinogens, but only coproporphyrinogen III can ultimately be converted to heme. The protein is Uroporphyrinogen decarboxylase (hem12) of Schizosaccharomyces pombe (strain 972 / ATCC 24843) (Fission yeast).